A 341-amino-acid polypeptide reads, in one-letter code: S-adenosylmethionine:tRNA ribosyltransferase-isomerase (341 aa).

Belongs to the QueA family. As to quaternary structure, monomer.

The protein localises to the cytoplasm. It catalyses the reaction 7-aminomethyl-7-carbaguanosine(34) in tRNA + S-adenosyl-L-methionine = epoxyqueuosine(34) in tRNA + adenine + L-methionine + 2 H(+). It functions in the pathway tRNA modification; tRNA-queuosine biosynthesis. Transfers and isomerizes the ribose moiety from AdoMet to the 7-aminomethyl group of 7-deazaguanine (preQ1-tRNA) to give epoxyqueuosine (oQ-tRNA). The chain is S-adenosylmethionine:tRNA ribosyltransferase-isomerase from Desulfitobacterium hafniense (strain DSM 10664 / DCB-2).